We begin with the raw amino-acid sequence, 1347 residues long: Spermatogenesis-associated protein 31A7 (1347 aa).

A helical membrane pass occupies residues 23–43 (PWVLDIFLTLVFALGFFFLLL). Disordered stretches follow at residues 55 to 88 (PSPS…RECP), 106 to 233 (GPHL…RDST), 374 to 397 (QDTT…GPQK), 628 to 658 (DESP…EAQK), 900 to 955 (RGIP…REAV), 1084 to 1161 (VHEE…PSVS), and 1313 to 1335 (KAVS…SHHH). The span at 60 to 82 (GKRKCPVGRRRRPRGRMKNHSLR) shows a compositional bias: basic residues. A compositionally biased stretch (polar residues) spans 165–178 (LASTPSPGPMTTSV). Over residues 198–211 (PEPPALFPHPPHTP) the composition is skewed to pro residues. Polar residues-rich tracts occupy residues 631 to 651 (PGTS…STGE) and 927 to 948 (LTYS…SSKA). Composition is skewed to basic and acidic residues over residues 1108–1127 (HKSE…RLEG) and 1137–1146 (RKTEDTHQDE).

Belongs to the SPATA31 family.

Its subcellular location is the membrane. In terms of biological role, may play a role in spermatogenesis. The chain is Spermatogenesis-associated protein 31A7 from Homo sapiens (Human).